The following is a 586-amino-acid chain: Acyl-coenzyme A synthetase ACSM3, mitochondrial (586 aa).

Residues 1–27 constitute a mitochondrion transit peptide; sequence MLACVTMKMLRHAKCFQRLAIFGSVRA. Residues Lys73 and Lys106 each carry the N6-succinyllysine modification. Lys157 carries the post-translational modification N6-acetyllysine. ATP contacts are provided by residues 235–243, 374–379, Asp461, Arg476, and Lys572; these read TSGTSGYPK and EGYGQT.

It belongs to the ATP-dependent AMP-binding enzyme family. Mg(2+) is required as a cofactor. It depends on Mn(2+) as a cofactor.

It is found in the mitochondrion. Its subcellular location is the mitochondrion matrix. The enzyme catalyses a medium-chain fatty acid + ATP + CoA = a medium-chain fatty acyl-CoA + AMP + diphosphate. It carries out the reaction propanoate + ATP + CoA = propanoyl-CoA + AMP + diphosphate. The catalysed reaction is butanoate + ATP + CoA = butanoyl-CoA + AMP + diphosphate. It catalyses the reaction 2-methylpropanoate + ATP + CoA = 2-methylpropanoyl-CoA + AMP + diphosphate. The enzyme catalyses 2-methylbutanoate + ATP + CoA = 2-methylbutanoyl-CoA + AMP + diphosphate. It carries out the reaction octanoate + ATP + CoA = octanoyl-CoA + AMP + diphosphate. In terms of biological role, catalyzes the activation of fatty acids by CoA to produce an acyl-CoA, the first step in fatty acid metabolism. Capable of activating medium-chain fatty acids with a preference for isobutyrate among fatty acids with 2-6 carbon atoms. In Pongo abelii (Sumatran orangutan), this protein is Acyl-coenzyme A synthetase ACSM3, mitochondrial (ACSM3).